The following is a 1724-amino-acid chain: Protein scribble homolog (1724 aa).

Residues 1–821 (MLKCIPLWRC…MTVLRERMVE (821 aa)) form a sufficient for targeting to adherens junction region. LRR repeat units lie at residues 11–34 (NRHVESVDKRHCSLTAVPDEIYRY), 35–58 (NRSLEELLLDANQLRELPKPFFRL), 59–81 (HNLRKLGLSDNEIQKLPPDVANF), 83–105 (QLVELDISRNDISEIPENIKFCQ), 107–127 (LEIADFSGNPLTRLPDGFTQL), 128–150 (RGLAHLSLNDVSLQSLPNDIGNL), 151–174 (SNLVTLELRENLLKSLPSSLSFLV), 176–196 (LEQLDLGSNVLEVLPDTLGAL), 197–219 (PNLRELWLDRNQLSSLPPELGNL), 221–242 (QLVCLDVSENRLSELPTEISGL), 244–265 (ALTDLLLSENLLEILPDSIGSL), 266–288 (KKLSILKVNQNRLVHLTDSIGEC), 289–311 (ENLTELMLTENLLQSLPRSLGKL), 312–334 (KKLTNLNVDRNRLSSVPAELGGC), 336–357 (SLNVLSLRDNRLGKLPPELANA), 359–380 (ELHVLDVAGNRLQNLPFALANL), and 382–405 (LKAMWLAENQSQPMLKFQTEDDEQ). Disordered regions lie at residues 451 to 484 (RDDSKHEEEDDETAADKRGLQRRATPHPSELKVM), 496 to 620 (YTAR…RKDT), and 646 to 683 (SHDGLSPTAHTPENERDGEDDEEEEEDEDEEDDLHTPF). Residues 518–534 (SNQSHDSQASSSTTSAT) are compositionally biased toward low complexity. Residues 554–567 (VQEEEDLDEMEVEY) are compositionally biased toward acidic residues. The segment covering 574-583 (FAEEPIIRGG) has biased composition (basic and acidic residues). The segment covering 584–598 (DEDDDYDNDDDDAER) has biased composition (acidic residues). Positions 611 to 620 (EKQRLIRKDT) are enriched in basic and acidic residues. Positions 661 to 678 (RDGEDDEEEEEDEDEEDD) are enriched in acidic residues. 4 PDZ domains span residues 731 to 818 (TLSI…LRER), 867 to 955 (ATCL…DREQ), 1005 to 1094 (EVTL…RRDP), and 1101 to 1193 (EIVI…CDGF). The tract at residues 955–995 (QSSVGGASPRTRPHSPPPPEPSDSPEQEDGGDEHLGNHLNC) is disordered. Disordered regions lie at residues 1283–1407 (LQKV…DRQK), 1414–1433 (KQQTPDKPKPRISLVGEDDL), 1449–1468 (REFMLDEDEEEEEEDLAKQV), and 1488–1555 (SLGS…GESA). A compositionally biased stretch (basic and acidic residues) spans 1295–1306 (FRIDSPVRDAAH). Composition is skewed to polar residues over residues 1308–1329 (PHNSQSNIHFPSNANTKDNAST), 1346–1357 (PASQDGHSSPNP), and 1364–1385 (PINSQTTDLYSPRNNVSAKQPS). The span at 1395–1407 (HSPEQRSFKDRQK) shows a compositional bias: basic and acidic residues. Residues 1430-1461 (EDDLKKMKEEEAKRIEQRAREFMLDEDEEEEE) adopt a coiled-coil conformation. Residues 1453 to 1463 (LDEDEEEEEED) show a composition bias toward acidic residues. Residues 1490-1506 (GSPTSRQCATPPNYSAT) show a composition bias toward polar residues. Low complexity predominate over residues 1507 to 1518 (PPSHCGSSGPSS). Positions 1521–1538 (GKGDSQRNSVEDSFRLEQ) are enriched in basic and acidic residues. The residue at position 1609 (serine 1609) is a Phosphoserine. The disordered stretch occupies residues 1621–1684 (IAKSKEGKKR…FMDESSSNAV (64 aa)). Residues 1623 to 1632 (KSKEGKKRGT) show a composition bias toward basic and acidic residues.

Post-translationally, palmitoylated.

It localises to the cell membrane. It is found in the cell junction. Its subcellular location is the adherens junction. The protein resides in the cell projection. The protein localises to the lamellipodium. It localises to the cytoplasm. It is found in the postsynapse. Its subcellular location is the presynapse. Its function is as follows. Scaffold protein involved in different aspects of polarized cells differentiation regulating epithelial and neuronal morphogenesis. Regulates the caudal migration of the nVII motor neurons. Required for convergent extension movements during gastrulation. This chain is Protein scribble homolog (scrib), found in Danio rerio (Zebrafish).